The sequence spans 874 residues: Adhesion G-protein coupled receptor D1 (874 aa).

A signal peptide spans 1-25; that stretch reads MEKLLRLCCWYSWLLLFYYNFQVRG. Topologically, residues 26–567 are extracellular; sequence VYSRSQDHPG…LARGHQVALS (542 aa). Residues 79-276 enclose the Pentraxin (PTX) domain; sequence KGVTLLYYGR…ASPVMPTDAY (198 aa). 9 N-linked (GlcNAc...) asparagine glycosylation sites follow: N90, N185, N282, N302, N319, N394, N476, N501, and N533. In terms of domain architecture, GAIN-B spans 371-557; it reads QVTVEGSSAM…AILMQVVPLE (187 aa). Disulfide bonds link C510–C539 and C527–C541. The tract at residues 510 to 557 is GPS; sequence CAFLDFSSGEGVWSNHGCALTRGNLTYSVCRCTHLTNFAILMQVVPLE. The interval 546–554 is stachel; sequence NFAILMQVV. A 17beta-hydroxy-5alpha-androstan-3-one-binding site is contributed by Q563. The helical transmembrane segment at 568–590 threads the bilayer; that stretch reads SISYVGCSLSVLCLVATLVTFAV. The Cytoplasmic portion of the chain corresponds to 591 to 601; it reads LSSVSTIRNQR. The chain crosses the membrane as a helical span at residues 602-623; that stretch reads YHIHANLSFAVLVAQVLLLISF. The Extracellular portion of the chain corresponds to 624-632; that stretch reads RLEPGTTPC. A disulfide bridge connects residues C632 and C704. The chain crosses the membrane as a helical span at residues 633–655; sequence QVMAVLLHYFFLSAFAWMLVEGL. Residues 656 to 673 lie on the Cytoplasmic side of the membrane; sequence HLYSMVIKVFGSEDSKHR. Residues 674-695 form a helical membrane-spanning segment; it reads YYYGMGWGFPLLICIISLSFAM. At 696–710 the chain is on the extracellular side; the sequence is DSYGTSNNCWLSLAS. The chain crosses the membrane as a helical span at residues 711–732; it reads GAIWAFVAPALFVIVVNIGILI. Over 733–757 the chain is Cytoplasmic; sequence AVTRVISQISADNYKIHGDPSAFKL. The helical transmembrane segment at 758 to 780 threads the bilayer; that stretch reads TAKAVAVLLPILGTSWVFGVLAV. Over 781 to 783 the chain is Extracellular; that stretch reads NGC. The chain crosses the membrane as a helical span at residues 784–810; that stretch reads AVVFQYMFATLNSLQGLFIFLFHCLLN. 17beta-hydroxy-5alpha-androstan-3-one is bound at residue N795. Topologically, residues 811–874 are cytoplasmic; the sequence is SEVRAAFKHK…SAHRVDLSAV (64 aa). Residues 854–874 form a disordered region; sequence TKLSPWDKSSHSAHRVDLSAV. The segment covering 861-874 has biased composition (basic and acidic residues); that stretch reads KSSHSAHRVDLSAV.

It belongs to the G-protein coupled receptor 2 family. Adhesion G-protein coupled receptor (ADGR) subfamily. In terms of assembly, heterodimer of 2 chains generated by proteolytic processing; the large extracellular N-terminal fragment and the membrane-bound C-terminal fragment predominantly remain associated and non-covalently linked. Interacts with ESYT1; interaction takes place in absence of cytosolic calcium and inhibits the G protein-coupled receptor activity of ADGRD1. Post-translationally, autoproteolytically processed at the GPS region of the GAIN-B domain; this cleavage modulates receptor activity. Cleavage takes place early in the secretory pathway before N-glycosylation. As to expression, up-regulated in CD133(+) cell population of glioblastoma.

Its subcellular location is the cell membrane. Its activity is regulated as follows. Forms a heterodimer of 2 chains generated by proteolytic processing that remain associated through non-covalent interactions mediated by the GAIN-B domain. In the inactivated receptor, the Stachel sequence (also named stalk) is embedded in the GAIN-B domain, where it adopts a beta-strand conformation. On activation, the Stachel moves into the 7 transmembrane region and adopts a twisted hook-shaped configuration that forms contacts within the receptor, leading to coupling of a G-alpha protein, which activates signaling. The cleaved GAIN-B and N-terminal domains can then dissociate from the rest of the receptor. Interaction with ESYT1 in absence of cytosolic calcium inhibits the G protein-coupled receptor activity; interaction and inhibition is relieved when cytosolic calcium increases. Activated by AP503, a small molecule that activates ADGRD1 without activating androgen nuclear receptors: AP503 enhances muscle strength without eliciting androgenic adverse effects. Activated by the 8E3E8 antibody that targets the N-terminus. In terms of biological role, adhesion G-protein coupled receptor (aGPCR) for androgen hormone 5alpha-dihydrotestosterone (5alpha-DHT), also named 17beta-hydroxy-5alpha-androstan-3-one, the most potent hormone among androgens. Also activated by methenolone drug. Ligand binding causes a conformation change that triggers signaling via guanine nucleotide-binding proteins (G proteins) and modulates the activity of downstream effectors, such as adenylate cyclase. ADGRD1 is coupled to G(s) G proteins and mediates activation of adenylate cyclase activity. Acts as a 5alpha-DHT receptor in muscle cells, thereby increasing intracellular cyclic AMP (cAMP) levels and enhancing muscle strength. This is Adhesion G-protein coupled receptor D1 from Homo sapiens (Human).